A 103-amino-acid chain; its full sequence is Co-chaperonin GroES (103 aa).

This sequence belongs to the GroES chaperonin family. Heptamer of 7 subunits arranged in a ring. Interacts with the chaperonin GroEL.

The protein localises to the cytoplasm. Together with the chaperonin GroEL, plays an essential role in assisting protein folding. The GroEL-GroES system forms a nano-cage that allows encapsulation of the non-native substrate proteins and provides a physical environment optimized to promote and accelerate protein folding. GroES binds to the apical surface of the GroEL ring, thereby capping the opening of the GroEL channel. This chain is Co-chaperonin GroES, found in Synechococcus sp. (strain CC9902).